The sequence spans 323 residues: Dof zinc finger protein DOF3.6 (323 aa).

The Dof-type zinc-finger motif lies at 76 to 130 (LNCPRCDSTNTKFCYFNNYSLTQPRHFCKTCRRYWTRGGSLRNVPVGGGFRRNKR). Cys78, Cys81, Cys103, and Cys106 together coordinate Zn(2+). 2 disordered regions span residues 121-160 (VGGG…SYSN) and 304-323 (GGNS…HLSF). The segment covering 126–135 (RRNKRSKSRS) has biased composition (basic residues). The span at 136–159 (KSTVVVSTDNTTSTSSLTSRPSYS) shows a compositional bias: low complexity.

In terms of assembly, interacts with OBF4. In terms of tissue distribution, predominantly expressed in roots.

The protein localises to the nucleus. Its function is as follows. Transcription factor that binds specifically to a 5'-AA[AG]G-3' consensus core sequence. Enhances the DNA binding of OBF transcription factors to OCS elements. This Arabidopsis thaliana (Mouse-ear cress) protein is Dof zinc finger protein DOF3.6 (DOF3.6).